A 205-amino-acid chain; its full sequence is Octanoyltransferase (205 aa).

The 176-residue stretch at 30 to 205 folds into the BPL/LPL catalytic domain; that stretch reads NLSDELVWLL…ILKQEFHKIF (176 aa). Residues 68 to 75, 140 to 142, and 153 to 155 contribute to the substrate site; these read RGGKYTYH, AFG, and GIA. Cys-171 (acyl-thioester intermediate) is an active-site residue.

It belongs to the LipB family.

The protein resides in the cytoplasm. The catalysed reaction is octanoyl-[ACP] + L-lysyl-[protein] = N(6)-octanoyl-L-lysyl-[protein] + holo-[ACP] + H(+). It participates in protein modification; protein lipoylation via endogenous pathway; protein N(6)-(lipoyl)lysine from octanoyl-[acyl-carrier-protein]: step 1/2. Functionally, catalyzes the transfer of endogenously produced octanoic acid from octanoyl-acyl-carrier-protein onto the lipoyl domains of lipoate-dependent enzymes. Lipoyl-ACP can also act as a substrate although octanoyl-ACP is likely to be the physiological substrate. In Wolbachia pipientis subsp. Culex pipiens (strain wPip), this protein is Octanoyltransferase.